The following is a 219-amino-acid chain: Phosphatidylinositol phosphate synthase (219 aa).

A CDP-1,2-diacyl-sn-glycerol is bound at residue 29 to 32; that stretch reads NQLT. The next 2 helical transmembrane spans lie at 31–47 and 53–72; these read LTLV…LLLI and IWAA…DGTV. Mg(2+)-binding residues include Asp66 and Asp69. A CDP-1,2-diacyl-sn-glycerol contacts are provided by Gly70, Arg74, and Thr80. Mg(2+)-binding residues include Asp87 and Asp91. Asp91 (proton acceptor) is an active-site residue. Transmembrane regions (helical) follow at residues 93-110, 116-133, 154-171, and 177-194; these read ITDG…VYSY, LVAA…ISYV, RLIV…GVPY, and LWAL…RLVM.

The protein belongs to the CDP-alcohol phosphatidyltransferase class-I family. As to quaternary structure, homodimer. Mg(2+) serves as cofactor.

Its subcellular location is the cell membrane. The catalysed reaction is a CDP-1,2-diacyl-sn-glycerol + 1D-myo-inositol 3-phosphate = a 1,2-diacyl-sn-glycero-3-phospho-(1D-myo-inositol-3-phosphate) + CMP + H(+). It catalyses the reaction 1,2-di-(9Z-octadecenoyl)-sn-glycero-3-cytidine-5'-diphosphate + 1D-myo-inositol 3-phosphate = 1,2-di-(9Z-octadecenoyl)-sn-glycero-3-phospho-(1D-myo-inositol-3-phosphate) + CMP + H(+). It participates in phospholipid metabolism; phosphatidylinositol phosphate biosynthesis. Its function is as follows. Catalyzes the conjugation of the 1'-hydroxyl group of D-myo-inositol-3-phosphate (also named L-myo-inositol-1-phosphate) with a lipid tail of cytidine diphosphate diacylglycerol (CDP-DAG), forming phosphatidylinositol phosphate (PIP) and CMP. PIP is a precursor of phosphatidylinositol (PI) which is an essential lipid required for cell wall formation. This chain is Phosphatidylinositol phosphate synthase, found in Corynebacterium glutamicum (strain ATCC 13032 / DSM 20300 / JCM 1318 / BCRC 11384 / CCUG 27702 / LMG 3730 / NBRC 12168 / NCIMB 10025 / NRRL B-2784 / 534).